Reading from the N-terminus, the 101-residue chain is Small ribosomal subunit protein bS18c (101 aa).

Over residues 1-19 (MDKSKQLFRKSKRSFRRRL) the composition is skewed to basic residues. The disordered stretch occupies residues 1–23 (MDKSKQLFRKSKRSFRRRLPPIG).

The protein belongs to the bacterial ribosomal protein bS18 family. Part of the 30S ribosomal subunit.

It localises to the plastid. The protein localises to the chloroplast. The sequence is that of Small ribosomal subunit protein bS18c from Acorus calamus (Sweet flag).